Reading from the N-terminus, the 478-residue chain is Muscarinic acetylcholine receptor M4 (478 aa).

Residues Met-1 to Glu-30 are Extracellular-facing. Asn-8 and Asn-13 each carry an N-linked (GlcNAc...) asparagine glycan. Residues Met-31–Met-53 form a helical membrane-spanning segment. Over Leu-54–Asn-67 the chain is Cytoplasmic. Residues Tyr-68–Tyr-88 form a helical membrane-spanning segment. Topologically, residues Thr-89–Asp-105 are extracellular. Cys-104 and Cys-184 form a disulfide bridge. Residues Leu-106–Phe-127 form a helical membrane-spanning segment. Residues Asp-128–Met-147 are Cytoplasmic-facing. A helical membrane pass occupies residues Ala-148–Trp-170. At Gln-171–Pro-192 the chain is on the extracellular side. Residues Ala-193–Ile-215 form a helical membrane-spanning segment. The Cytoplasmic segment spans residues His-216–Thr-400. The tract at residues Leu-271 to Asn-333 is disordered. A compositionally biased stretch (pro residues) spans Ala-274 to Pro-285. Residues Asn-293–Asn-303 show a composition bias toward polar residues. Over residues Thr-310 to Leu-332 the composition is skewed to low complexity. A helical membrane pass occupies residues Ile-401–Val-421. The Extracellular segment spans residues Asn-422–Ser-435. A helical membrane pass occupies residues Ile-436–Cys-455. At Asn-456–Arg-478 the chain is on the cytoplasmic side. 3 positions are modified to phosphothreonine: Thr-458, Thr-462, and Thr-476.

This sequence belongs to the G-protein coupled receptor 1 family. Muscarinic acetylcholine receptor subfamily. CHRM4 sub-subfamily.

It is found in the cell membrane. The protein localises to the postsynaptic cell membrane. The muscarinic acetylcholine receptor mediates various cellular responses, including inhibition of adenylate cyclase, breakdown of phosphoinositides and modulation of potassium channels through the action of G proteins. Primary transducing effect is inhibition of adenylate cyclase. The polypeptide is Muscarinic acetylcholine receptor M4 (Chrm4) (Rattus norvegicus (Rat)).